Reading from the N-terminus, the 240-residue chain is Splicing factor rtf2 (240 aa).

Disordered stretches follow at residues 1–22 (MGND…GKVP) and 181–240 (SLNK…RVKI). Basic residues predominate over residues 185 to 210 (ASKKSNKNGDKKRKHVSKSNSKHAKH). Basic and acidic residues-rich tracts occupy residues 211–224 (ELRT…ENVK) and 231–240 (DMERVKRVKI).

It belongs to the rtf2 family. In terms of assembly, interacts with pcn1.

It localises to the nucleus. In terms of biological role, putative splicing factor that is required for the correct splicing of a subset of pre-mRNAs. Required for the correct splicing of rtf1, a replication termination factor that mediates site-specific replication termination at replication barrier RTS1. This is Splicing factor rtf2 from Schizosaccharomyces pombe (strain 972 / ATCC 24843) (Fission yeast).